Here is a 212-residue protein sequence, read N- to C-terminus: Phosphatidylserine decarboxylase proenzyme (212 aa).

Catalysis depends on serine 182, which acts as the Schiff-base intermediate with substrate; via pyruvic acid. Serine 182 is subject to Pyruvic acid (Ser); by autocatalysis.

It belongs to the phosphatidylserine decarboxylase family. PSD-A subfamily. Heterodimer of a large membrane-associated beta subunit and a small pyruvoyl-containing alpha subunit. Pyruvate is required as a cofactor. Post-translationally, is synthesized initially as an inactive proenzyme. Formation of the active enzyme involves a self-maturation process in which the active site pyruvoyl group is generated from an internal serine residue via an autocatalytic post-translational modification. Two non-identical subunits are generated from the proenzyme in this reaction, and the pyruvate is formed at the N-terminus of the alpha chain, which is derived from the carboxyl end of the proenzyme. The post-translation cleavage follows an unusual pathway, termed non-hydrolytic serinolysis, in which the side chain hydroxyl group of the serine supplies its oxygen atom to form the C-terminus of the beta chain, while the remainder of the serine residue undergoes an oxidative deamination to produce ammonia and the pyruvoyl prosthetic group on the alpha chain.

The protein resides in the cell membrane. It catalyses the reaction a 1,2-diacyl-sn-glycero-3-phospho-L-serine + H(+) = a 1,2-diacyl-sn-glycero-3-phosphoethanolamine + CO2. Its pathway is phospholipid metabolism; phosphatidylethanolamine biosynthesis; phosphatidylethanolamine from CDP-diacylglycerol: step 2/2. Catalyzes the formation of phosphatidylethanolamine (PtdEtn) from phosphatidylserine (PtdSer). This Chlorobium chlorochromatii (strain CaD3) protein is Phosphatidylserine decarboxylase proenzyme.